The sequence spans 530 residues: Rho GTPase-activating protein 36 (530 aa).

Positions 1–19 (MPPLLLLSALIFLVNVLGG) are cleaved as a signal peptide. Residues 209–409 (MSLNPIAKQI…AMIDNWDVLF (201 aa)) enclose the Rho-GAP domain. The disordered stretch occupies residues 471–512 (GQSKPFDEGSSEEPAVPPGTARSHDDEEGAGNPLILEQDRPL).

As to quaternary structure, may interacts (via the Rho-GAP domain) with the active form of RAC1.

Functionally, GTPase activator for the Rho-type GTPases by converting them to an inactive GDP-bound state. This Bos taurus (Bovine) protein is Rho GTPase-activating protein 36 (ARHGAP36).